The chain runs to 757 residues: Lysyl oxidase homolog 4 (757 aa).

A signal peptide spans 1–25 (MWFLPAALPLLPLLLLLGQAPPSRP). SRCR domains follow at residues 33-134 (LRLV…VVCN), 160-288 (VRLK…VSCV), 312-412 (VRLR…VRCN), and 422-530 (VRLA…VSCT). Cystine bridges form between Cys-59/Cys-123, Cys-72/Cys-133, Cys-103/Cys-113, Cys-192/Cys-277, Cys-205/Cys-287, Cys-252/Cys-262, Cys-337/Cys-401, Cys-350/Cys-411, Cys-381/Cys-391, Cys-451/Cys-516, Cys-464/Cys-529, Cys-498/Cys-508, Cys-559/Cys-565, Cys-611/Cys-659, Cys-643/Cys-649, Cys-671/Cys-681, and Cys-718/Cys-732. A glycan (N-linked (GlcNAc...) asparagine) is linked at Asn-199. The tract at residues 534 to 737 (PDLVMNAQLV…WLHNCHTGDS (204 aa)) is lysyl-oxidase like. 3 residues coordinate Cu cation: His-612, His-614, and His-616. Asn-630 is a glycosylation site (N-linked (GlcNAc...) asparagine). Residues 639 to 675 (KASFCLEDTNCPTGMQRRYACANFGEQGVTVGCWDTY) constitute a cross-link (lysine tyrosylquinone (Lys-Tyr)). The residue at position 675 (Tyr-675) is a 2',4',5'-topaquinone.

This sequence belongs to the lysyl oxidase family. The cofactor is Cu cation. Requires lysine tyrosylquinone residue as cofactor. Post-translationally, the lysine tyrosylquinone cross-link (LTQ) is generated by condensation of the epsilon-amino group of a lysine with a topaquinone produced by oxidation of tyrosine. In terms of processing, may be proteolytically cleaved by BMP1.

It localises to the secreted. The protein resides in the extracellular space. It carries out the reaction L-lysyl-[protein] + O2 + H2O = (S)-2-amino-6-oxohexanoyl-[protein] + H2O2 + NH4(+). Catalyzes the oxidative deamination of lysine and hydroxylysine residues in collagen and elastin, resulting in the formation of covalent cross-linkages, and the stabilization of collagen and elastin fibers. In Bos taurus (Bovine), this protein is Lysyl oxidase homolog 4 (LOXL4).